The primary structure comprises 243 residues: 1-(5-phosphoribosyl)-5-[(5-phosphoribosylamino)methylideneamino] imidazole-4-carboxamide isomerase (243 aa).

Catalysis depends on D8, which acts as the Proton acceptor. D129 (proton donor) is an active-site residue.

It belongs to the HisA/HisF family.

It is found in the cytoplasm. It carries out the reaction 1-(5-phospho-beta-D-ribosyl)-5-[(5-phospho-beta-D-ribosylamino)methylideneamino]imidazole-4-carboxamide = 5-[(5-phospho-1-deoxy-D-ribulos-1-ylimino)methylamino]-1-(5-phospho-beta-D-ribosyl)imidazole-4-carboxamide. It participates in amino-acid biosynthesis; L-histidine biosynthesis; L-histidine from 5-phospho-alpha-D-ribose 1-diphosphate: step 4/9. This is 1-(5-phosphoribosyl)-5-[(5-phosphoribosylamino)methylideneamino] imidazole-4-carboxamide isomerase from Brucella abortus (strain 2308).